The chain runs to 378 residues: Branched-chain-amino-acid aminotransferase (378 aa).

Lys-213 bears the N6-(pyridoxal phosphate)lysine mark.

It belongs to the class-IV pyridoxal-phosphate-dependent aminotransferase family. Homodimer. Requires pyridoxal 5'-phosphate as cofactor.

It catalyses the reaction L-leucine + 2-oxoglutarate = 4-methyl-2-oxopentanoate + L-glutamate. The enzyme catalyses L-isoleucine + 2-oxoglutarate = (S)-3-methyl-2-oxopentanoate + L-glutamate. It carries out the reaction L-valine + 2-oxoglutarate = 3-methyl-2-oxobutanoate + L-glutamate. Its function is as follows. Catalyzes the first reaction in the catabolism of the essential branched chain amino acids leucine, isoleucine, and valine. The polypeptide is Branched-chain-amino-acid aminotransferase (bcaA) (Dictyostelium discoideum (Social amoeba)).